The sequence spans 667 residues: Acyl-coenzyme A oxidase acox-3 (667 aa).

FAD is bound by residues 138-141, 146-147, G178, R313, 334-337, and G410; these read FCLT, GS, and QQYR. Residue E433 is the Proton acceptor of the active site. E435 serves as a coordination point for FAD. A Microbody targeting signal motif is present at residues 665-667; sequence SKL.

This sequence belongs to the acyl-CoA oxidase family. Homodimer. FAD serves as cofactor. As to expression, expressed in intestine.

Its subcellular location is the peroxisome. It carries out the reaction IC-asc-C7-CoA + O2 = IC-asc-DeltaC7-CoA + H2O2. It catalyses the reaction IC-asc-C9-CoA + O2 = IC-asc-DeltaC9-CoA + H2O2. The enzyme catalyses asc-C13-CoA + O2 = asc-DeltaC13-CoA + H2O2. It functions in the pathway lipid metabolism; peroxisomal fatty acid beta-oxidation. With respect to regulation, in contrast to other acyl-coenzyme A oxidases which bind to and are activated by ATP, does not bind ATP. In terms of biological role, involved in the first step of peroxisomal beta-oxidation by catalyzing the desaturation of fatty acid-derived side chains of ascaroside pheromones, which regulates development and behavior. Specifically, shortens indol-3-carbonyl(IC)-ascarosides with 7-carbon (IC-asc-C7) or 9-carbon (IC-asc-C9) side chains and contributes to the shortening of ascarosides with 13-carbon (asc-C13) and 15-carbon (asc-C15) side chains. The polypeptide is Acyl-coenzyme A oxidase acox-3 (Caenorhabditis elegans).